A 122-amino-acid polypeptide reads, in one-letter code: Large ribosomal subunit protein uL14 (122 aa).

Belongs to the universal ribosomal protein uL14 family. In terms of assembly, part of the 50S ribosomal subunit. Forms a cluster with proteins L3 and L19. In the 70S ribosome, L14 and L19 interact and together make contacts with the 16S rRNA in bridges B5 and B8.

Functionally, binds to 23S rRNA. Forms part of two intersubunit bridges in the 70S ribosome. The polypeptide is Large ribosomal subunit protein uL14 (Thiobacillus denitrificans (strain ATCC 25259 / T1)).